Reading from the N-terminus, the 354-residue chain is Alanine racemase (354 aa).

Lys33 (proton acceptor; specific for D-alanine) is an active-site residue. Lys33 bears the N6-(pyridoxal phosphate)lysine mark. Substrate is bound at residue Arg127. Tyr251 serves as the catalytic Proton acceptor; specific for L-alanine. Met299 serves as a coordination point for substrate.

Belongs to the alanine racemase family. The cofactor is pyridoxal 5'-phosphate.

The catalysed reaction is L-alanine = D-alanine. Its pathway is amino-acid biosynthesis; D-alanine biosynthesis; D-alanine from L-alanine: step 1/1. Functionally, catalyzes the interconversion of L-alanine and D-alanine. May also act on other amino acids. The protein is Alanine racemase (alr) of Fusobacterium nucleatum subsp. nucleatum (strain ATCC 25586 / DSM 15643 / BCRC 10681 / CIP 101130 / JCM 8532 / KCTC 2640 / LMG 13131 / VPI 4355).